Here is a 177-residue protein sequence, read N- to C-terminus: ATP synthase subunit delta, chloroplastic (177 aa).

This sequence belongs to the ATPase delta chain family. In terms of assembly, F-type ATPases have 2 components, F(1) - the catalytic core - and F(0) - the membrane proton channel. F(1) has five subunits: alpha(3), beta(3), gamma(1), delta(1), epsilon(1). CF(0) has four main subunits: a(1), b(1), b'(1) and c(10-14). The alpha and beta chains form an alternating ring which encloses part of the gamma chain. F(1) is attached to F(0) by a central stalk formed by the gamma and epsilon chains, while a peripheral stalk is formed by the delta, b and b' chains.

The protein resides in the plastid. It localises to the chloroplast thylakoid membrane. Its function is as follows. F(1)F(0) ATP synthase produces ATP from ADP in the presence of a proton or sodium gradient. F-type ATPases consist of two structural domains, F(1) containing the extramembraneous catalytic core and F(0) containing the membrane proton channel, linked together by a central stalk and a peripheral stalk. During catalysis, ATP synthesis in the catalytic domain of F(1) is coupled via a rotary mechanism of the central stalk subunits to proton translocation. In terms of biological role, this protein is part of the stalk that links CF(0) to CF(1). It either transmits conformational changes from CF(0) to CF(1) or is implicated in proton conduction. The sequence is that of ATP synthase subunit delta, chloroplastic from Galdieria sulphuraria (Red alga).